A 464-amino-acid chain; its full sequence is Colanic acid biosynthesis protein WcaM (464 aa).

It functions in the pathway slime biogenesis; slime polysaccharide biosynthesis. This chain is Colanic acid biosynthesis protein WcaM (wcaM), found in Shigella flexneri.